Consider the following 314-residue polypeptide: Dihydroorotate dehydrogenase B (NAD(+)), catalytic subunit (314 aa).

Substrate contacts are provided by residues lysine 55, asparagine 79 to leucine 83, and asparagine 136. Lysine 55–serine 56 lines the FMN pocket. Asparagine 136 serves as a coordination point for FMN. Cysteine 139 acts as the Nucleophile in catalysis. 2 residues coordinate FMN: lysine 174 and isoleucine 200. Asparagine 201 to threonine 202 lines the substrate pocket. FMN contacts are provided by residues glycine 226, glycine 252–glycine 253, and glycine 274–serine 275.

Belongs to the dihydroorotate dehydrogenase family. Type 1 subfamily. In terms of assembly, heterotetramer of 2 PyrK and 2 PyrD type B subunits. Requires FMN as cofactor.

Its subcellular location is the cytoplasm. The enzyme catalyses (S)-dihydroorotate + NAD(+) = orotate + NADH + H(+). Its pathway is pyrimidine metabolism; UMP biosynthesis via de novo pathway; orotate from (S)-dihydroorotate (NAD(+) route): step 1/1. Functionally, catalyzes the conversion of dihydroorotate to orotate with NAD(+) as electron acceptor. The polypeptide is Dihydroorotate dehydrogenase B (NAD(+)), catalytic subunit (pyrD) (Methanosarcina mazei (strain ATCC BAA-159 / DSM 3647 / Goe1 / Go1 / JCM 11833 / OCM 88) (Methanosarcina frisia)).